Here is a 288-residue protein sequence, read N- to C-terminus: Xyloglucan endotransglucosylase protein 8 (288 aa).

A signal peptide spans 1–25 (MAASPYSIFAVQLLLLASWMLSSSS). A GH16 domain is found at 26–215 (SNFNQDFNIA…WTQAPFTTSY (190 aa)). Residue glutamate 102 is the Nucleophile of the active site. Catalysis depends on glutamate 106, which acts as the Proton donor. Glutamate 106 contacts xyloglucan. The N-linked (GlcNAc...) asparagine glycan is linked to asparagine 110. Xyloglucan is bound by residues 119-121 (HTN), 129-131 (ERE), 194-195 (EW), and glycine 199. 2 disulfide bridges follow: cysteine 224–cysteine 233 and cysteine 268–cysteine 282. Xyloglucan is bound at residue arginine 273.

It belongs to the glycosyl hydrolase 16 family. XTH group 2 subfamily. Post-translationally, contains at least one intrachain disulfide bond essential for its enzymatic activity. In terms of tissue distribution, highly expressed in mature fruits. Very low expression in leaves, flowers, calyces and stems.

Its subcellular location is the secreted. It localises to the cell wall. The protein resides in the extracellular space. The protein localises to the apoplast. The catalysed reaction is breaks a beta-(1-&gt;4) bond in the backbone of a xyloglucan and transfers the xyloglucanyl segment on to O-4 of the non-reducing terminal glucose residue of an acceptor, which can be a xyloglucan or an oligosaccharide of xyloglucan.. Its function is as follows. Catalyzes xyloglucan endotransglycosylation (XET). Cleaves and religates xyloglucan polymers. Does not catalyze xyloglucan endohydrolysis (XEH). Overexpression in Arabidopsis transgenic plants causes accelerated dark-induced leaf senescence and higher lipid peroxidation of the leaf cells. Overexpression in transgenic tomato plants promotes fruit ripening and softening. Probably involved in cell wall restructuring during postharvest fruit softening. The sequence is that of Xyloglucan endotransglucosylase protein 8 from Diospyros kaki (Kaki persimmon).